A 284-amino-acid chain; its full sequence is MFEKLSCHTSIKIGGRVKYLVLPNDVFSLERAINVLGDVPFQMMGLGTNLLVQDDDLDIAVVKTERLNQIEIKGEKVLVESGTPLKRLCLFLMEAELGGLEFAYGIPGSVGGAIYMNAGAYGGEIGEFVEAVEVLRDGKRTWLSKNEIFFGYRDSTFKREKSIITRVMMSFKREKKEVIKAKMDDYIKRRLEKQPLDLPSAGSVFKRPREDFYVGKAIESLGLKGYRIGGAQISEKHAGFIVNAGNATFDDVMKLIEFVRKKVKEKYGVELETEVEIWWNGRRW.

Residues 12-174 (KIGGRVKYLV…TRVMMSFKRE (163 aa)) enclose the FAD-binding PCMH-type domain. Residue Arg153 is part of the active site. Residue Ser203 is the Proton donor of the active site. The active site involves Glu274.

This sequence belongs to the MurB family. FAD is required as a cofactor.

The protein localises to the cytoplasm. The enzyme catalyses UDP-N-acetyl-alpha-D-muramate + NADP(+) = UDP-N-acetyl-3-O-(1-carboxyvinyl)-alpha-D-glucosamine + NADPH + H(+). It participates in cell wall biogenesis; peptidoglycan biosynthesis. Cell wall formation. In Thermotoga petrophila (strain ATCC BAA-488 / DSM 13995 / JCM 10881 / RKU-1), this protein is UDP-N-acetylenolpyruvoylglucosamine reductase.